Reading from the N-terminus, the 163-residue chain is Cytochrome b6-f complex subunit 4 (163 aa).

Transmembrane regions (helical) follow at residues 36–56 (LLYIFPVVILGTIACNVGLAV), 95–115 (LLGVLLMVSVPTGLLTVPFLE), and 131–151 (TVFLIGTAVALWLGIGATLPI).

It belongs to the cytochrome b family. PetD subfamily. As to quaternary structure, the 4 large subunits of the cytochrome b6-f complex are cytochrome b6, subunit IV (17 kDa polypeptide, petD), cytochrome f and the Rieske protein, while the 4 small subunits are petG, petL, petM and petN. The complex functions as a dimer.

The protein resides in the plastid. It is found in the chloroplast thylakoid membrane. In terms of biological role, component of the cytochrome b6-f complex, which mediates electron transfer between photosystem II (PSII) and photosystem I (PSI), cyclic electron flow around PSI, and state transitions. The sequence is that of Cytochrome b6-f complex subunit 4 from Drimys granadensis.